Consider the following 614-residue polypeptide: Leucine aminopeptidase 2 (614 aa).

A peptide contacts are provided by residues 139–141 (QCQ) and 271–276 (PYGGME). Zn(2+) is bound at residue H300. E301 (proton acceptor) is an active-site residue. Positions 304 and 323 each coordinate Zn(2+). Y385 functions as the Proton donor in the catalytic mechanism.

It belongs to the peptidase M1 family. Requires Zn(2+) as cofactor.

It is found in the cytoplasm. The protein localises to the nucleus. The catalysed reaction is an epoxide + H2O = an ethanediol. Functionally, aminopeptidase that preferentially cleaves di- and tripeptides. Also has low epoxide hydrolase activity (in vitro). Can hydrolyze the epoxide leukotriene LTA(4) but it forms preferentially 5,6-dihydroxy-7,9,11,14-eicosatetraenoic acid rather than the cytokine leukotriene B(4) as the product compared to the homologous mammalian enzyme (in vitro). This chain is Leucine aminopeptidase 2, found in Aspergillus fumigatus (strain ATCC MYA-4609 / CBS 101355 / FGSC A1100 / Af293) (Neosartorya fumigata).